The chain runs to 292 residues: MKNLKGIFSALLVSFNEDGSINEKGLREIVRYNIDKMKIDGLYVGGSTGENFMLSTAEKKEIFRIAKEEAKDQVALIAQVGSVNLHEAVELGKYATELGYDSLSAVTPFYYKFSFAEIKHYYETIIAETGNNMIVYSIPFLTGVNMGVEQFGELYANPKVLGVKFTAGDFYLLERLKKAYPNHLVWAGFDEMMLPAVSLGVDGAIGSTFNVNGLRARQIFELAKAGKVAEALEIQHVTNDLIEGILANGLYLTIKEILKLQGVNAGYCREPMTAKATEKQLAVAKELKEKFL.

Aceneuramate is bound by residues Ser47 and Thr48. Tyr136 acts as the Proton donor in catalysis. Lys164 (schiff-base intermediate with substrate) is an active-site residue. Aceneuramate-binding residues include Thr166, Gly188, Asp190, Glu191, and Ser207.

Belongs to the DapA family. NanA subfamily. Homotetramer.

Its subcellular location is the cytoplasm. It catalyses the reaction aceneuramate = aldehydo-N-acetyl-D-mannosamine + pyruvate. The protein operates within amino-sugar metabolism; N-acetylneuraminate degradation; D-fructose 6-phosphate from N-acetylneuraminate: step 1/5. Catalyzes the reversible aldol cleavage of N-acetylneuraminic acid (sialic acid; Neu5Ac) to form pyruvate and N-acetylmannosamine (ManNAc) via a Schiff base intermediate. In Histophilus somni (strain 129Pt) (Haemophilus somnus), this protein is N-acetylneuraminate lyase.